The sequence spans 131 residues: Small ribosomal subunit protein uS8 (131 aa).

This sequence belongs to the universal ribosomal protein uS8 family. Part of the 30S ribosomal subunit. Contacts proteins S5 and S12.

One of the primary rRNA binding proteins, it binds directly to 16S rRNA central domain where it helps coordinate assembly of the platform of the 30S subunit. The polypeptide is Small ribosomal subunit protein uS8 (Campylobacter jejuni subsp. doylei (strain ATCC BAA-1458 / RM4099 / 269.97)).